Reading from the N-terminus, the 147-residue chain is MSRLEVTEKIVATKVAKGLKWSDIAAKVGLSKEWTTAACLGQMTLTKEQAGIVGEIFSLSDAEQKWLMVVPYKGSLPTTVPTDPLIYRFYELVSVYGTTFKELIHEEFGDGIMSAIDFKMDLQREPHPAGDRVSITMSGKFLPYKTY.

Residues Arg88, Glu91, and Ser114 contribute to the active site.

This sequence belongs to the cyanase family.

The enzyme catalyses cyanate + hydrogencarbonate + 3 H(+) = NH4(+) + 2 CO2. In terms of biological role, catalyzes the reaction of cyanate with bicarbonate to produce ammonia and carbon dioxide. The polypeptide is Cyanate hydratase (Methylibium petroleiphilum (strain ATCC BAA-1232 / LMG 22953 / PM1)).